Consider the following 276-residue polypeptide: Rhomboid protease GlpG (276 aa).

A run of 6 helical transmembrane segments spans residues 94 to 114, 142 to 162, 169 to 189, 192 to 212, 229 to 249, and 250 to 270; these read GPVT…MQIL, ALMH…WYLG, LGSG…GYVQ, FSGP…GYVW, LIIF…GMSM, and ANGA…VDSL. The Nucleophile role is filled by Ser-201. Residue His-254 is part of the active site.

This sequence belongs to the peptidase S54 family.

The protein resides in the cell inner membrane. It carries out the reaction Cleaves type-1 transmembrane domains using a catalytic dyad composed of serine and histidine that are contributed by different transmembrane domains.. Functionally, rhomboid-type serine protease that catalyzes intramembrane proteolysis. This is Rhomboid protease GlpG from Shigella boydii serotype 4 (strain Sb227).